Consider the following 675-residue polypeptide: Methionine--tRNA ligase (675 aa).

The 'HIGH' region signature appears at 15–25 (PYANGSIHLGH). Zn(2+) is bound by residues Cys-146, Cys-149, Cys-159, and Cys-162. Residues 331–335 (KMSKS) carry the 'KMSKS' region motif. Lys-334 lines the ATP pocket. The tRNA-binding domain occupies 574-675 (DFAKIDLRIA…EGAQPGMKVK (102 aa)).

Belongs to the class-I aminoacyl-tRNA synthetase family. MetG type 1 subfamily. In terms of assembly, homodimer. Requires Zn(2+) as cofactor.

The protein localises to the cytoplasm. It catalyses the reaction tRNA(Met) + L-methionine + ATP = L-methionyl-tRNA(Met) + AMP + diphosphate. Is required not only for elongation of protein synthesis but also for the initiation of all mRNA translation through initiator tRNA(fMet) aminoacylation. This is Methionine--tRNA ligase from Pseudoalteromonas atlantica (strain T6c / ATCC BAA-1087).